Here is a 426-residue protein sequence, read N- to C-terminus: Protein arginine methyltransferase NDUFAF7 homolog, mitochondrial (426 aa).

The protein belongs to the NDUFAF7 family.

The protein localises to the mitochondrion. The enzyme catalyses L-arginyl-[protein] + 2 S-adenosyl-L-methionine = N(omega),N(omega)'-dimethyl-L-arginyl-[protein] + 2 S-adenosyl-L-homocysteine + 2 H(+). Functionally, arginine methyltransferase involved in the assembly or stability of mitochondrial NADH:ubiquinone oxidoreductase complex (complex I). The chain is Protein arginine methyltransferase NDUFAF7 homolog, mitochondrial from Caenorhabditis elegans.